A 943-amino-acid polypeptide reads, in one-letter code: MQDSVMQRMWNSAHLSGGNAAYVEELYELYLHDPNAVPEEWRTYFEKLPAEAGTSTDVPHAPVRDQFVLLAKNQRRAQPVATSSVSTEHEKKQVEVLRLIQAYRTRGHQASQLDPLGLWQRTAPSDLSITHYGLTNADLDTPFRTGELYIGKEEATLREILQALQETYCRTIGAEFTHIVDSEQRNWFAQRLESVRGRPVYSKEAKSHLLERLSAAEGLEKYLGTKYPGTKRFGLEGGESLVPVVDEIIQRSGSYGTKEVVIGMAHRGRLNLLVNALGKNPRDLFDEFEGKHLVELGSGDVKYHQGFSSNVMTSGGEVHLAMAFNPSHLEIVSPVVEGSVRARQDRRVDATGEKVVPISIHGDSAFAGQGVVMETFQMSQIRGYKTGGTIHIVVNNQVGFTTSNPVDTRSTEYCTDPAKMIQAPVLHVNGDDPEAVLFVTQLAVDYRMQFKRDVVIDLVCYRRRGHNEADEPSGTQPLMYQKIAKQPTTRELYADALVKEGSLSQEEVQAKVDEYRTALDNGQHVLKSLVKEPNTELFVDWTPYLGHAWTARHDTSFELKTLQELNAKLLQIPEGFVVQRQVAKILEDRGRMGVGAMPINWGCAETLAYATLLKEGHPVRITGQDVGRGTFSHRHAALHNQKDASRYIPLQNLYEGQPKFELYDSFLSEEAVLAFEYGYATTTPNALVIWEASSGDFANGAQVVIDQFISSGETKWGALCGLTMLLPHGYEGQGPEHSSARLERYLQLCAEQNIQVCVPTTPAQVYHMLRRQVIRPLRKPLVALTPKSLLRHKSAISTLEDLALGSFHPVLPEVDSLDPKKVERLVLCSGKVYYDLLDKRHAEGREDIAIVRIEQLYPFPEEELAEVMAPYTNLKHVVWCQEEPMNQGAWYCSQHHMRRVASAHKKELFLQYAGREASAAPACGYASMHAEQQEKLLQDAFTV.

Belongs to the alpha-ketoglutarate dehydrogenase family. In terms of assembly, homodimer. Part of the 2-oxoglutarate dehydrogenase (OGDH) complex composed of E1 (2-oxoglutarate dehydrogenase), E2 (dihydrolipoamide succinyltransferase) and E3 (dihydrolipoamide dehydrogenase); the complex contains multiple copies of the three enzymatic components (E1, E2 and E3). Thiamine diphosphate serves as cofactor.

The catalysed reaction is N(6)-[(R)-lipoyl]-L-lysyl-[protein] + 2-oxoglutarate + H(+) = N(6)-[(R)-S(8)-succinyldihydrolipoyl]-L-lysyl-[protein] + CO2. E1 component of the 2-oxoglutarate dehydrogenase (OGDH) complex which catalyzes the decarboxylation of 2-oxoglutarate, the first step in the conversion of 2-oxoglutarate to succinyl-CoA and CO(2). This is 2-oxoglutarate dehydrogenase E1 component (sucA) from Azotobacter vinelandii.